The following is a 507-amino-acid chain: Maturase K (507 aa).

Belongs to the intron maturase 2 family. MatK subfamily.

It localises to the plastid. Its subcellular location is the chloroplast. Functionally, usually encoded in the trnK tRNA gene intron. Probably assists in splicing its own and other chloroplast group II introns. The chain is Maturase K from Craterostigma plantagineum (Blue gem).